We begin with the raw amino-acid sequence, 364 residues long: Fructose-bisphosphate aldolase A (364 aa).

Tyrosine 5 is modified (phosphotyrosine). A Phosphothreonine modification is found at threonine 9. Phosphoserine occurs at positions 36 and 39. N6-acetyllysine; alternate is present on lysine 42. Residue lysine 42 forms a Glycyl lysine isopeptide (Lys-Gly) (interchain with G-Cter in SUMO1); alternate linkage. Residue lysine 42 forms a Glycyl lysine isopeptide (Lys-Gly) (interchain with G-Cter in SUMO2); alternate linkage. Arginine 43 serves as a coordination point for beta-D-fructose 1,6-bisphosphate. Serine 46 is subject to Phosphoserine. Lysine 99 is subject to N6-(2-hydroxyisobutyryl)lysine. Lysine 108 carries the N6-acetyllysine modification. Lysine 111 carries the post-translational modification N6-acetyllysine; alternate. Lysine 111 is subject to N6-malonyllysine; alternate. Position 132 is a phosphoserine (serine 132). Lysine 147 carries the N6-(2-hydroxyisobutyryl)lysine modification. Residue glutamate 188 is the Proton acceptor of the active site. Lysine 230 serves as the catalytic Schiff-base intermediate with dihydroxyacetone-P. The residue at position 272 (serine 272) is a Phosphoserine. Beta-D-fructose 1,6-bisphosphate contacts are provided by residues 272 to 274, serine 301, and arginine 304; that span reads SGG. Lysine 312 carries the N6-malonyllysine modification. N6-acetyllysine is present on lysine 330.

Belongs to the class I fructose-bisphosphate aldolase family. Homotetramer. Interacts with SNX9 and WAS. Interacts with FBP2; the interaction blocks FBP2 inhibition by physiological concentrations of AMP and reduces inhibition by Ca(2+).

It localises to the cytoplasm. The protein localises to the myofibril. It is found in the sarcomere. Its subcellular location is the i band. The protein resides in the m line. The catalysed reaction is beta-D-fructose 1,6-bisphosphate = D-glyceraldehyde 3-phosphate + dihydroxyacetone phosphate. It functions in the pathway carbohydrate degradation; glycolysis; D-glyceraldehyde 3-phosphate and glycerone phosphate from D-glucose: step 4/4. In terms of biological role, catalyzes the reversible conversion of beta-D-fructose 1,6-bisphosphate (FBP) into two triose phosphate and plays a key role in glycolysis and gluconeogenesis. In addition, may also function as scaffolding protein. This Mus musculus (Mouse) protein is Fructose-bisphosphate aldolase A (Aldoa).